The following is an 838-amino-acid chain: DNA gyrase subunit A (838 aa).

The Topo IIA-type catalytic domain maps to 41–510 (LPEVRDGLKP…ADGDVSDEDL (470 aa)). The O-(5'-phospho-DNA)-tyrosine intermediate role is filled by Y129. A GyrA-box motif is present at residues 537–543 (QKRGGKG).

The protein belongs to the type II topoisomerase GyrA/ParC subunit family. Heterotetramer, composed of two GyrA and two GyrB chains. In the heterotetramer, GyrA contains the active site tyrosine that forms a transient covalent intermediate with DNA, while GyrB binds cofactors and catalyzes ATP hydrolysis.

It localises to the cytoplasm. The enzyme catalyses ATP-dependent breakage, passage and rejoining of double-stranded DNA.. Its function is as follows. A type II topoisomerase that negatively supercoils closed circular double-stranded (ds) DNA in an ATP-dependent manner to modulate DNA topology and maintain chromosomes in an underwound state. Negative supercoiling favors strand separation, and DNA replication, transcription, recombination and repair, all of which involve strand separation. Also able to catalyze the interconversion of other topological isomers of dsDNA rings, including catenanes and knotted rings. Type II topoisomerases break and join 2 DNA strands simultaneously in an ATP-dependent manner. The protein is DNA gyrase subunit A of Mycobacterium tuberculosis (strain CDC 1551 / Oshkosh).